The following is a 411-amino-acid chain: Arginine deiminase (411 aa).

Cysteine 399 functions as the Amidino-cysteine intermediate in the catalytic mechanism.

It belongs to the arginine deiminase family.

It localises to the cytoplasm. The catalysed reaction is L-arginine + H2O = L-citrulline + NH4(+). Its pathway is amino-acid degradation; L-arginine degradation via ADI pathway; carbamoyl phosphate from L-arginine: step 1/2. In Latilactobacillus sakei subsp. sakei (strain 23K) (Lactobacillus sakei subsp. sakei), this protein is Arginine deiminase.